The following is a 204-amino-acid chain: CASP-like protein 1B2 (204 aa).

Residues 1-28 (MASKGEEKPELVGSKQGIVSVTKAKHDQ) are Cytoplasmic-facing. The helical transmembrane segment at 29–49 (IVLVLRVVAFLATASATIVMG) threads the bilayer. Residues 50-80 (LNQETKTLLVGTIGTTPIRATLKAKFQHTPA) are Extracellular-facing. The helical transmembrane segment at 81–101 (FVFFVVANGLASVYNLVMLGV) threads the bilayer. Residues 102–114 (DVFGRKLDCKGLR) are Cytoplasmic-facing. The chain crosses the membrane as a helical span at residues 115-135 (LVIISILDMVIVAVVAAGASS). Residues 136-168 (AAFMAELGKNGNSHAKWNKICDKFESFCHQGGG) are Extracellular-facing. The helical transmembrane segment at 169–189 (ALIPSFIALLLLFLISAISII) threads the bilayer. Over 190 to 204 (TLHNQKLTSPHATTP) the chain is Cytoplasmic.

It belongs to the Casparian strip membrane proteins (CASP) family. In terms of assembly, homodimer and heterodimers.

Its subcellular location is the cell membrane. In Vitis vinifera (Grape), this protein is CASP-like protein 1B2.